Here is a 307-residue protein sequence, read N- to C-terminus: UDP-N-acetylenolpyruvoylglucosamine reductase (307 aa).

The region spanning 34–199 (RVGGPAQVLF…TAVRFRGTPS (166 aa)) is the FAD-binding PCMH-type domain. The active site involves arginine 179. The active-site Proton donor is the serine 228. Glutamate 298 is an active-site residue.

It belongs to the MurB family. FAD serves as cofactor.

It localises to the cytoplasm. The catalysed reaction is UDP-N-acetyl-alpha-D-muramate + NADP(+) = UDP-N-acetyl-3-O-(1-carboxyvinyl)-alpha-D-glucosamine + NADPH + H(+). It functions in the pathway cell wall biogenesis; peptidoglycan biosynthesis. Its function is as follows. Cell wall formation. The polypeptide is UDP-N-acetylenolpyruvoylglucosamine reductase (Bradyrhizobium sp. (strain ORS 278)).